A 555-amino-acid polypeptide reads, in one-letter code: Suppressor of tumorigenicity 7 protein-like (555 aa).

A run of 2 helical transmembrane segments spans residues 36–56 (GLAG…LYAL) and 80–100 (FYVA…IFEW). The segment at 126–148 (TESSISEPGSPSNNRESETSRQN) is disordered.

It belongs to the ST7 family.

Its subcellular location is the membrane. This chain is Suppressor of tumorigenicity 7 protein-like (ST7L), found in Bos taurus (Bovine).